Here is a 203-residue protein sequence, read N- to C-terminus: Shikimate kinase (203 aa).

Residue 32–37 (GAGKTA) coordinates ATP. Thr-36 is a binding site for Mg(2+). Substrate-binding residues include Asp-54, Arg-78, and Gly-100. Arg-138 contacts ATP. Arg-157 provides a ligand contact to substrate.

This sequence belongs to the shikimate kinase family. Monomer. It depends on Mg(2+) as a cofactor.

Its subcellular location is the cytoplasm. The enzyme catalyses shikimate + ATP = 3-phosphoshikimate + ADP + H(+). Its pathway is metabolic intermediate biosynthesis; chorismate biosynthesis; chorismate from D-erythrose 4-phosphate and phosphoenolpyruvate: step 5/7. Catalyzes the specific phosphorylation of the 3-hydroxyl group of shikimic acid using ATP as a cosubstrate. The sequence is that of Shikimate kinase from Mesorhizobium japonicum (strain LMG 29417 / CECT 9101 / MAFF 303099) (Mesorhizobium loti (strain MAFF 303099)).